The following is a 542-amino-acid chain: Chaperonin GroEL 2 (542 aa).

ATP-binding positions include 30–33, Lys-51, 87–91, Gly-415, and Asp-496; these read TLGP and DGTTT.

Belongs to the chaperonin (HSP60) family. As to quaternary structure, forms a cylinder of 14 subunits composed of two heptameric rings stacked back-to-back. Interacts with the co-chaperonin GroES.

It localises to the cytoplasm. The enzyme catalyses ATP + H2O + a folded polypeptide = ADP + phosphate + an unfolded polypeptide.. Together with its co-chaperonin GroES, plays an essential role in assisting protein folding. The GroEL-GroES system forms a nano-cage that allows encapsulation of the non-native substrate proteins and provides a physical environment optimized to promote and accelerate protein folding. This Cereibacter sphaeroides (strain ATCC 17023 / DSM 158 / JCM 6121 / CCUG 31486 / LMG 2827 / NBRC 12203 / NCIMB 8253 / ATH 2.4.1.) (Rhodobacter sphaeroides) protein is Chaperonin GroEL 2.